Reading from the N-terminus, the 348-residue chain is Aldose 1-epimerase (348 aa).

A substrate-binding site is contributed by R80. The Proton donor role is filled by H180. Substrate is bound at residue D243. The Proton acceptor role is filled by E311.

It belongs to the aldose epimerase family.

It catalyses the reaction alpha-D-glucose = beta-D-glucose. The protein operates within carbohydrate metabolism; hexose metabolism. Its function is as follows. Mutarotase converts alpha-aldose to the beta-anomer. It is active on D-glucose, L-arabinose, D-xylose, D-galactose, maltose and lactose. The chain is Aldose 1-epimerase (galM) from Streptococcus thermophilus.